A 71-amino-acid polypeptide reads, in one-letter code: DNA-directed RNA polymerase subunit epsilon (71 aa).

This sequence belongs to the RNA polymerase subunit epsilon family. As to quaternary structure, RNAP is composed of a core of 2 alpha, a beta and a beta' subunit. The core is associated with a delta subunit, and at least one of epsilon or omega. When a sigma factor is associated with the core the holoenzyme is formed, which can initiate transcription.

The catalysed reaction is RNA(n) + a ribonucleoside 5'-triphosphate = RNA(n+1) + diphosphate. In terms of biological role, a non-essential component of RNA polymerase (RNAP). The polypeptide is DNA-directed RNA polymerase subunit epsilon (Anoxybacillus flavithermus (strain DSM 21510 / WK1)).